The chain runs to 80 residues: Large ribosomal subunit protein bL31B (80 aa).

The protein belongs to the bacterial ribosomal protein bL31 family. Type B subfamily. Part of the 50S ribosomal subunit.

The chain is Large ribosomal subunit protein bL31B from Streptococcus mutans serotype c (strain ATCC 700610 / UA159).